The chain runs to 397 residues: Protein RecA (397 aa).

A disordered region spans residues 1–23; it reads MALETKPAKDPAAEDKHELDPKR. ATP is bound at residue 83-90; sequence GPESSGKT.

It belongs to the RecA family.

It is found in the cytoplasm. In terms of biological role, can catalyze the hydrolysis of ATP in the presence of single-stranded DNA, the ATP-dependent uptake of single-stranded DNA by duplex DNA, and the ATP-dependent hybridization of homologous single-stranded DNAs. It interacts with LexA causing its activation and leading to its autocatalytic cleavage. The protein is Protein RecA of Bifidobacterium longum (strain NCC 2705).